Consider the following 482-residue polypeptide: tRNA sulfurtransferase (482 aa).

Residues 61-165 (LAIRDALTRI…DDRLLLIKGR (105 aa)) enclose the THUMP domain. Residues 183-184 (LI), lysine 265, glycine 287, and glutamine 296 each bind ATP. The cysteines at positions 344 and 456 are disulfide-linked. The Rhodanese domain occupies 404 to 482 (FGPNDVILDI…GFNNVKVYRP (79 aa)). Cysteine 456 acts as the Cysteine persulfide intermediate in catalysis.

Belongs to the ThiI family.

It is found in the cytoplasm. It catalyses the reaction [ThiI sulfur-carrier protein]-S-sulfanyl-L-cysteine + a uridine in tRNA + 2 reduced [2Fe-2S]-[ferredoxin] + ATP + H(+) = [ThiI sulfur-carrier protein]-L-cysteine + a 4-thiouridine in tRNA + 2 oxidized [2Fe-2S]-[ferredoxin] + AMP + diphosphate. The enzyme catalyses [ThiS sulfur-carrier protein]-C-terminal Gly-Gly-AMP + S-sulfanyl-L-cysteinyl-[cysteine desulfurase] + AH2 = [ThiS sulfur-carrier protein]-C-terminal-Gly-aminoethanethioate + L-cysteinyl-[cysteine desulfurase] + A + AMP + 2 H(+). Its pathway is cofactor biosynthesis; thiamine diphosphate biosynthesis. Catalyzes the ATP-dependent transfer of a sulfur to tRNA to produce 4-thiouridine in position 8 of tRNAs, which functions as a near-UV photosensor. Also catalyzes the transfer of sulfur to the sulfur carrier protein ThiS, forming ThiS-thiocarboxylate. This is a step in the synthesis of thiazole, in the thiamine biosynthesis pathway. The sulfur is donated as persulfide by IscS. This is tRNA sulfurtransferase from Escherichia coli (strain 55989 / EAEC).